The chain runs to 439 residues: Potassium/proton antiporter CemA (439 aa).

6 consecutive transmembrane segments (helical) span residues 55 to 75, 79 to 99, 220 to 240, 317 to 337, 364 to 384, and 399 to 419; these read IMLY…WSLL, ISLF…NFFN, YMLF…IWFL, LLHL…FILG, ILLL…EIVI, and IISC…KYWI.

The protein belongs to the CemA family.

It localises to the plastid. The protein localises to the chloroplast inner membrane. The enzyme catalyses K(+)(in) + H(+)(out) = K(+)(out) + H(+)(in). In terms of biological role, contributes to K(+)/H(+) antiport activity by supporting proton efflux to control proton extrusion and homeostasis in chloroplasts in a light-dependent manner to modulate photosynthesis. Prevents excessive induction of non-photochemical quenching (NPQ) under continuous-light conditions. Indirectly promotes efficient inorganic carbon uptake into chloroplasts. This Physcomitrium patens (Spreading-leaved earth moss) protein is Potassium/proton antiporter CemA.